Here is a 142-residue protein sequence, read N- to C-terminus: Interleukin-3 (142 aa).

Residues 1 to 18 (MSHLPILLLLLLVSPGLQ) form the signal peptide. The N-linked (GlcNAc...) asparagine glycan is linked to asparagine 33. The cysteines at positions 34 and 102 are disulfide-linked.

This sequence belongs to the IL-3 family. Monomer. Activated T-cells, mast cells, natural killer cells.

It localises to the secreted. Functionally, granulocyte/macrophage colony-stimulating factors are cytokines that act in hematopoiesis by controlling the production, differentiation, and function of 2 related white cell populations of the blood, the granulocytes and the monocytes-macrophages. In terms of biological role, this CSF induces granulocytes, macrophages, mast cells, stem cells, erythroid cells, eosinophils and megakaryocytes. This chain is Interleukin-3 (IL3), found in Callithrix jacchus (White-tufted-ear marmoset).